The chain runs to 205 residues: Proteasome subunit beta type-3 (205 aa).

It belongs to the peptidase T1B family. The 26S proteasome consists of a 20S proteasome core and two 19S regulatory subunits. The 20S proteasome core is composed of 28 subunits that are arranged in four stacked rings, resulting in a barrel-shaped structure. The two end rings are each formed by seven alpha subunits, and the two central rings are each formed by seven beta subunits. The catalytic chamber with the active sites is on the inside of the barrel.

It localises to the cytoplasm. The protein resides in the nucleus. Its function is as follows. Non-catalytic component of the proteasome, a multicatalytic proteinase complex which is characterized by its ability to cleave peptides with Arg, Phe, Tyr, Leu, and Glu adjacent to the leaving group at neutral or slightly basic pH. The proteasome has an ATP-dependent proteolytic activity. The sequence is that of Proteasome subunit beta type-3 from Drosophila melanogaster (Fruit fly).